The primary structure comprises 856 residues: Leucine--tRNA ligase (856 aa).

The 'HIGH' region signature appears at P42–H52. A 'KMSKS' region motif is present at residues K617–S621. An ATP-binding site is contributed by K620.

This sequence belongs to the class-I aminoacyl-tRNA synthetase family.

The protein localises to the cytoplasm. It carries out the reaction tRNA(Leu) + L-leucine + ATP = L-leucyl-tRNA(Leu) + AMP + diphosphate. The polypeptide is Leucine--tRNA ligase (Rippkaea orientalis (strain PCC 8801 / RF-1) (Cyanothece sp. (strain PCC 8801))).